Here is a 285-residue protein sequence, read N- to C-terminus: Bifunctional protein FolD (285 aa).

Residues G163–S165 and S188 contribute to the NADP(+) site.

It belongs to the tetrahydrofolate dehydrogenase/cyclohydrolase family. As to quaternary structure, homodimer.

The catalysed reaction is (6R)-5,10-methylene-5,6,7,8-tetrahydrofolate + NADP(+) = (6R)-5,10-methenyltetrahydrofolate + NADPH. It carries out the reaction (6R)-5,10-methenyltetrahydrofolate + H2O = (6R)-10-formyltetrahydrofolate + H(+). The protein operates within one-carbon metabolism; tetrahydrofolate interconversion. Functionally, catalyzes the oxidation of 5,10-methylenetetrahydrofolate to 5,10-methenyltetrahydrofolate and then the hydrolysis of 5,10-methenyltetrahydrofolate to 10-formyltetrahydrofolate. This is Bifunctional protein FolD from Lactococcus lactis subsp. cremoris (strain MG1363).